Here is an 816-residue protein sequence, read N- to C-terminus: Neuroligin-4, X-linked (816 aa).

Positions 1-41 (MSRPQGLLWLPLLFTPVCVMLNSNVLLWLTALAIKFTLIDS) are cleaved as a signal peptide. Residues 42 to 676 (QAQYPVVNTN…TKRDYSTELS (635 aa)) are Extracellular-facing. N-linked (GlcNAc...) asparagine glycosylation is present at asparagine 102. Disulfide bonds link cysteine 110-cysteine 146 and cysteine 306-cysteine 317. The tract at residues 359 to 364 (QGEFLN) is interaction with NRXN1. Cysteine 476 and cysteine 510 are disulfide-bonded. Residue asparagine 511 is glycosylated (N-linked (GlcNAc...) asparagine). The tract at residues 636–659 (TKRPAITPANNPKHSKDPHKTGPE) is disordered. Over residues 649-658 (HSKDPHKTGP) the composition is skewed to basic and acidic residues. Residues 677–697 (VTIAVGASLLFLNILAFAALY) traverse the membrane as a helical segment. Over 698–816 (YKKDKRRHET…LPHGHSTTRV (119 aa)) the chain is Cytoplasmic. Serine 712 is subject to Phosphoserine.

This sequence belongs to the type-B carboxylesterase/lipase family. As to quaternary structure, homodimer. Interacts with NRXN1 in a calcium-dependent manner. Interaction with neurexins is mediated by heparan sulfate glycan modification on neurexin. Interacts through its C-terminus with DLG4/PSD-95 third PDZ domain. As to expression, expressed at highest levels in heart. Expressed at lower levels in liver, skeletal muscle and pancreas and at very low levels in brain.

The protein resides in the cell membrane. The protein localises to the postsynaptic density membrane. Functionally, cell surface protein involved in cell-cell-interactions via its interactions with neurexin family members. The chain is Neuroligin-4, X-linked (NLGN4X) from Homo sapiens (Human).